Here is a 538-residue protein sequence, read N- to C-terminus: Putative cysteine ligase BshC (538 aa).

The stretch at 460-485 (KINEQIELLERMLKRNIEKKHEVELN) forms a coiled coil.

This sequence belongs to the BshC family.

Involved in bacillithiol (BSH) biosynthesis. May catalyze the last step of the pathway, the addition of cysteine to glucosamine malate (GlcN-Mal) to generate BSH. This chain is Putative cysteine ligase BshC, found in Bacillus cereus (strain Q1).